Reading from the N-terminus, the 427-residue chain is MTSNEWSSPDSPEGSSISGGSQALDKPIDNDAEGVWSPEIERSFQEALAIYPPCGRRKIILTEEGKMYGRNELIARHIKLRTGKTRTRKQVSSHIQVLARRKAREIQAKLKDQAAKNKALQSMAAMSSAQIVSATAFHSKMALARGPGYPAISGFWQGALPGQPGTSHDVKPFSQNTYPVQPPLPLPGFESPAGPTPSPSAPLAPPWQGRSIASSKLWMLEFSAFLERQQDPDTYNKHLFVHISQSSPSYSDPYLETVDIRQIYDKFPEKKGGLKELFERGPSNAFFLVKFWADLNTNIDDEGSAFYGVSSQYESPENMIITCSTKVCSFGKQVVEKVETEYARYENGHYLYRIHRSPLCEYMINFIHKLKHLPEKYMMNSVLENFTILQVVTNRDTQETLLCIAYVFEVSASEHGAQHHIYRLVKE.

The disordered stretch occupies residues 1-32 (MTSNEWSSPDSPEGSSISGGSQALDKPIDNDA). Over residues 7–21 (SSPDSPEGSSISGGS) the composition is skewed to low complexity. Residues 29-105 (DNDAEGVWSP…QVLARRKARE (77 aa)) constitute a DNA-binding region (TEA). A Nuclear localization signal motif is present at residues 78-94 (IKLRTGKTRTRKQVSSH). The tract at residues 163–206 (QPGTSHDVKPFSQNTYPVQPPLPLPGFESPAGPTPSPSAPLAPP) is disordered. Residues 194–205 (GPTPSPSAPLAP) are compositionally biased toward pro residues.

In terms of assembly, interacts with WWTR1/TAZ. Interacts with YAP1. Preferentially expressed in lung and in skeletal muscle.

Its subcellular location is the nucleus. In terms of biological role, transcription factor which plays a key role in the Hippo signaling pathway, a pathway involved in organ size control and tumor suppression by restricting proliferation and promoting apoptosis. The core of this pathway is composed of a kinase cascade wherein MST1/MST2, in complex with its regulatory protein SAV1, phosphorylates and activates LATS1/2 in complex with its regulatory protein MOB1, which in turn phosphorylates and inactivates YAP1 oncoprotein and WWTR1/TAZ. Acts by mediating gene expression of YAP1 and WWTR1/TAZ, thereby regulating cell proliferation, migration and epithelial mesenchymal transition (EMT) induction. Binds specifically and non-cooperatively to the Sph and GT-IIC 'enhansons' (5'-GTGGAATGT-3') and activates transcription. Binds to the M-CAT motif. Might play a role in the embryonic development of skeletal muscle. This chain is Transcriptional enhancer factor TEF-3 (Tead4), found in Mus musculus (Mouse).